A 495-amino-acid chain; its full sequence is Probable histidine ammonia-lyase (495 aa).

Positions 141–143 (ASG) form a cross-link, 5-imidazolinone (Ala-Gly). Ser142 carries the post-translational modification 2,3-didehydroalanine (Ser).

This sequence belongs to the PAL/histidase family. Contains an active site 4-methylidene-imidazol-5-one (MIO), which is formed autocatalytically by cyclization and dehydration of residues Ala-Ser-Gly.

The protein localises to the cytoplasm. It catalyses the reaction L-histidine = trans-urocanate + NH4(+). Its pathway is amino-acid degradation; L-histidine degradation into L-glutamate; N-formimidoyl-L-glutamate from L-histidine: step 1/3. The sequence is that of Probable histidine ammonia-lyase from Thermoplasma volcanium (strain ATCC 51530 / DSM 4299 / JCM 9571 / NBRC 15438 / GSS1).